Here is a 469-residue protein sequence, read N- to C-terminus: Glutamate--tRNA ligase 2 (469 aa).

A 'HIGH' region motif is present at residues 10–20 (PSPTGFLHIGS). The 'KMSKS' region signature appears at 239-243 (KLSKR). Position 242 (lysine 242) interacts with ATP.

The protein belongs to the class-I aminoacyl-tRNA synthetase family. Glutamate--tRNA ligase type 1 subfamily. Monomer.

It is found in the cytoplasm. The catalysed reaction is tRNA(Glu) + L-glutamate + ATP = L-glutamyl-tRNA(Glu) + AMP + diphosphate. Functionally, catalyzes the attachment of glutamate to tRNA(Glu) in a two-step reaction: glutamate is first activated by ATP to form Glu-AMP and then transferred to the acceptor end of tRNA(Glu). The polypeptide is Glutamate--tRNA ligase 2 (Rickettsia typhi (strain ATCC VR-144 / Wilmington)).